Here is a 528-residue protein sequence, read N- to C-terminus: Peptide chain release factor 3 (528 aa).

The tr-type G domain occupies 11-279; the sequence is SRRRTFAIIS…GLVDWAPSPQ (269 aa). Residues 20-27, 88-92, and 142-145 each bind GTP; these read SHPDAGKT, DTPGH, and NKLD.

Belongs to the TRAFAC class translation factor GTPase superfamily. Classic translation factor GTPase family. PrfC subfamily.

It is found in the cytoplasm. Functionally, increases the formation of ribosomal termination complexes and stimulates activities of RF-1 and RF-2. It binds guanine nucleotides and has strong preference for UGA stop codons. It may interact directly with the ribosome. The stimulation of RF-1 and RF-2 is significantly reduced by GTP and GDP, but not by GMP. The sequence is that of Peptide chain release factor 3 from Pseudoalteromonas atlantica (strain T6c / ATCC BAA-1087).